We begin with the raw amino-acid sequence, 84 residues long: SPbeta prophage-derived uncharacterized protein YomY (84 aa).

This is SPbeta prophage-derived uncharacterized protein YomY (yomY) from Bacillus subtilis (strain 168).